Reading from the N-terminus, the 136-residue chain is Globin CTP-III (136 aa).

A Globin domain is found at 1–136 (LSADQISTVQ…TFFGMIFSKM (136 aa)). Residue His-87 coordinates heme b.

The protein belongs to the globin family. Monomer.

The sequence is that of Globin CTP-III from Chironomus thummi piger (Midge).